The following is a 550-amino-acid chain: Glypican-1 (550 aa).

The N-terminal stretch at M1–G20 is a signal peptide. Disulfide bonds link C29-C65, C59-C253, C66-C256, C188-C340, C243-C276, C265-C412, and C269-C398. Residues N76 and N113 are each glycosylated (N-linked (GlcNAc...) asparagine). N382 is a glycosylation site (N-linked (GlcNAc...) asparagine). 2 disordered regions span residues F475–D494 and K502–V522. Residues D481 to D494 show a composition bias toward low complexity. Residues S483, S485, and S487 are each glycosylated (O-linked (Xyl...) (heparan sulfate) serine). G524 is lipidated: GPI-anchor amidated glycine. Residues A525–R550 constitute a propeptide, removed in mature form.

The protein belongs to the glypican family. Post-translationally, O-glycosylated with heparan sulfate.

Its subcellular location is the cell membrane. The protein localises to the endosome. It is found in the secreted. It localises to the extracellular space. Functionally, cell surface proteoglycan that bears heparan sulfate. Modulates Wnt-signaling pathway. The polypeptide is Glypican-1 (GPC1) (Gallus gallus (Chicken)).